The sequence spans 144 residues: UPF0735 ACT domain-containing protein LSEI_1046 (144 aa).

The 76-residue stretch at valine 68–valine 143 folds into the ACT domain.

This sequence belongs to the UPF0735 family.

This Lacticaseibacillus paracasei (strain ATCC 334 / BCRC 17002 / CCUG 31169 / CIP 107868 / KCTC 3260 / NRRL B-441) (Lactobacillus paracasei) protein is UPF0735 ACT domain-containing protein LSEI_1046.